Reading from the N-terminus, the 235-residue chain is tRNA (guanine-N(7)-)-methyltransferase (235 aa).

Residues Gly60, 83–84 (EI), 116–117 (NA), and Leu136 each bind S-adenosyl-L-methionine. The active site involves Asp139. 214–216 (SEE) provides a ligand contact to S-adenosyl-L-methionine.

Belongs to the class I-like SAM-binding methyltransferase superfamily. TrmB family.

It localises to the nucleus. The enzyme catalyses guanosine(46) in tRNA + S-adenosyl-L-methionine = N(7)-methylguanosine(46) in tRNA + S-adenosyl-L-homocysteine. It participates in tRNA modification; N(7)-methylguanine-tRNA biosynthesis. Functionally, catalyzes the formation of N(7)-methylguanine at position 46 (m7G46) in tRNA. The chain is tRNA (guanine-N(7)-)-methyltransferase from Anopheles gambiae (African malaria mosquito).